We begin with the raw amino-acid sequence, 831 residues long: Periplasmic nitrate reductase (831 aa).

A signal peptide (tat-type signal) is located at residues 1–38 (MSMARRDFIKQTAAAAAATVAGVPLTGYTQNIVTESEA). The 57-residue stretch at 41-97 (LKWSKAPCRFCGTGCGVNVAVKDNQVVATHGDFNAEVNKGLNCVKGYFLSKIMYGSD) folds into the 4Fe-4S Mo/W bis-MGD-type domain. [4Fe-4S] cluster contacts are provided by Cys-48, Cys-51, Cys-55, and Cys-83. Residues Lys-85, Gln-152, Asn-177, Cys-181, 214 to 221 (WGSNMAEM), 245 to 249 (STFEH), 264 to 266 (QSD), Met-375, Gln-379, Asn-485, 511 to 512 (SD), Lys-534, Asp-561, and 721 to 730 (TGRVLEHWHS) each bind Mo-bis(molybdopterin guanine dinucleotide). Trp-797 is a substrate binding site. Positions 805 and 822 each coordinate Mo-bis(molybdopterin guanine dinucleotide).

Belongs to the prokaryotic molybdopterin-containing oxidoreductase family. NasA/NapA/NarB subfamily. As to quaternary structure, component of the periplasmic nitrate reductase NapAB complex composed of NapA and NapB. Requires [4Fe-4S] cluster as cofactor. Mo-bis(molybdopterin guanine dinucleotide) is required as a cofactor. Post-translationally, predicted to be exported by the Tat system. The position of the signal peptide cleavage has not been experimentally proven.

Its subcellular location is the periplasm. The catalysed reaction is 2 Fe(II)-[cytochrome] + nitrate + 2 H(+) = 2 Fe(III)-[cytochrome] + nitrite + H2O. In terms of biological role, catalytic subunit of the periplasmic nitrate reductase complex NapAB. Receives electrons from NapB and catalyzes the reduction of nitrate to nitrite. This chain is Periplasmic nitrate reductase, found in Bordetella parapertussis (strain 12822 / ATCC BAA-587 / NCTC 13253).